Consider the following 117-residue polypeptide: Large ribosomal subunit protein uL18 (117 aa).

Belongs to the universal ribosomal protein uL18 family. As to quaternary structure, part of the 50S ribosomal subunit; part of the 5S rRNA/L5/L18/L25 subcomplex. Contacts the 5S and 23S rRNAs.

Functionally, this is one of the proteins that bind and probably mediate the attachment of the 5S RNA into the large ribosomal subunit, where it forms part of the central protuberance. The polypeptide is Large ribosomal subunit protein uL18 (Aliivibrio fischeri (strain ATCC 700601 / ES114) (Vibrio fischeri)).